The following is a 295-amino-acid chain: Hydroxylase/desaturase efuI (295 aa).

This sequence belongs to the asaB hydroxylase/desaturase family.

The protein operates within secondary metabolite biosynthesis; terpenoid biosynthesis. Functionally, hydroxylase/desaturase; part of the gene cluster that mediates the biosynthesis of enfumafungin, a glycosylated fernene-type triterpenoid with potent antifungal activity, mediated by its interaction with beta-1,3-glucan synthase and the fungal cell wall. The pathway begins with the terpene cyclase-glycosyl transferase fusion protein that most likely uses 2,3-oxidosqualene as substrate and catalyzes glycosylation immediately after cyclization. The fernene glycoside then could be processed by the desaturase efuI which catalyzes isomerization of a double bond established by efuA to form the core structure. The latter would then undergo a series of hydroxylations in unknown order at C-2, C-19, C-23 and C-25, which would be catalyzed by two of the three cytochrome P450 monooxygenases efuB, efuG or efuH. The hydroxy-group at C-25 becomes oxidized by the dehydrogenase efuE to enable a spontaneous, non-enzymatic hemiacetal formation with C-23. After hydroxylation at C-2, acetylation by the acetyltransferase efuC takes place. The final steps in enfumafungin biosynthesis require expansion of the 5-membered ring by lactonization via a Baeyer-Villiger reaction mediated by one of the BGC's cytochrome P450 monooxygenases (efuB, efuG or efuH) followed by ring cleavage. This type of reaction would establish a double bond between C-20 and C-21 which could be reduced by the reductase efuL to form the final product. This is Hydroxylase/desaturase efuI from Hormonema carpetanum.